The sequence spans 361 residues: Peptide chain release factor 1 (361 aa).

The residue at position 235 (Gln235) is an N5-methylglutamine.

It belongs to the prokaryotic/mitochondrial release factor family. Methylated by PrmC. Methylation increases the termination efficiency of RF1.

The protein resides in the cytoplasm. In terms of biological role, peptide chain release factor 1 directs the termination of translation in response to the peptide chain termination codons UAG and UAA. The polypeptide is Peptide chain release factor 1 (Buchnera aphidicola subsp. Acyrthosiphon pisum (strain 5A)).